A 371-amino-acid polypeptide reads, in one-letter code: Trans-enoyl reductase calK (371 aa).

51-54 is an NADP(+) binding site; that stretch reads NDHK. 145-152 provides a ligand contact to substrate; the sequence is WSTISLAF. NADP(+)-binding positions include 181-184, 204-207, Tyr222, and 269-270; these read GTAS, SNQS, and LE. 289–293 contacts substrate; sequence GFQVL. Residue 359 to 360 coordinates NADP(+); the sequence is VR.

This sequence belongs to the zinc-containing alcohol dehydrogenase family. Monomer.

It participates in secondary metabolite biosynthesis. Trans-enoyl reductase; part of the gene cluster that mediates the biosynthesis of calbistrin A and related compounds. Calbistrin A is a secondary metabolite with an interesting structure that was recently found to have bioactivity against leukemia cells. It consists of two polyketides linked by an ester bond: a bicyclic decalin containing polyketide and a linear 12 carbon dioic acid structure. The polyketide synthase calA is probably responsible for forming the decalin moiety. Because calA lacks a designated enoylreductase (ER) domain, the required activity is provided by the trans-enoyl reductase calK. Following release from the PKS, calF then probably catalyzes the oxidation and the subsequent Diels Alder cycloisomerization that lead to the formation of the decalin moiety. The decalin polyketide backbone includes two C-methyl groups, at C7 and C11 in backbone, of which the C7 position is probably methylated by the methyltransferase domain of calA. A candidate for adding the methyl group at C11, if not done by CalA, is the cluster methyltransferase calH. Several additional tailoring enzymes within the cluster could be involved in the modification of the decalin polyketide product. Those include the 3 cytochrome P450 monooxygenases CalE, CalG and CalL, of which one might be responsible for the introduction of the extra hydroxyl group attached to the backbone of the decalin moiety, at position C9 in the backbone, that allows for attachment of the linear moiety. One tailoring enzyme activity that is expected to be involved in biosynthesis of calbistrin is an acyltransferase for connecting the two polyketide synthase products, and which could be performed by the cluster acyltransferase calJ. The enzyme responsible for the biosynthesis of the linear moiety, probably a second PKS, has not been identified yet. The protein is Trans-enoyl reductase calK of Penicillium decumbens.